The sequence spans 396 residues: MSLPFSQDERDLAAGGILTIDLAALRHNYSAIATRIAPTRTAAVVKADAYGLGASRVAPAFYEAGCRDFFVAHLGEAVALKPFLKPDATLYVLNGLQPGTEAACAREGILPVLNSLEQVENWAALATRLGKKLPALLQFDTGMSRLGLSAKEFDRLLENVTLLSRIDIKFAISHLANGDEPGNAVNARQLAKMTALLARLPKLPAALANSGGTFLGKTYYFDLARPGIALYGIDPERQHDFSDKVAHENKKPKHSILPVLTLSARVIQVRDVDKGATVGYGGTYVANGPMRIATIAVGYADGLFRSLSNKGAAFFGDTRLPIIGRVSMDSITLDVTSLPEGTLKLGSLVELIGPHQRLEDVARDCDTIPYEILTALGNRYARVYVYVNGGGTSTTA.

Residue Lys46 is the Proton acceptor; specific for D-alanine of the active site. N6-(pyridoxal phosphate)lysine is present on Lys46. Arg145 provides a ligand contact to substrate. Tyr280 functions as the Proton acceptor; specific for L-alanine in the catalytic mechanism. Residue Met328 coordinates substrate.

Belongs to the alanine racemase family. Requires pyridoxal 5'-phosphate as cofactor.

It catalyses the reaction L-alanine = D-alanine. It participates in amino-acid biosynthesis; D-alanine biosynthesis; D-alanine from L-alanine: step 1/1. Functionally, catalyzes the interconversion of L-alanine and D-alanine. May also act on other amino acids. The polypeptide is Alanine racemase (alr) (Brucella abortus (strain 2308)).